The sequence spans 4588 residues: MGRHLALLLLLLLLFQHFGDSDGSQRLEQTPLQFTHLEYNVTVQENSAAKTYVGHPVKMGVYITHPAWEVRYKIVSGDSENLFKAEEYILGDFCFLRIRTKGGNTAILNREVKDHYTLIVKALEKNTNVEARTKVRVQVLDTNDLRPLFSPTSYSVSLPENTAIRTSIARVSATDADIGTNGEFYYSFKDRTDMFAIHPTSGVIVLTGRLDYLETKLYEMEILAADRGMKLYGSSGISSMAKLTVHIEQANECAPVITAVTLSPSELDRDPAYAIVTVDDCDQGANGDIASLSIVAGDLLQQFRTVRSFPGSKEYKVKAIGGIDWDSHPFGYNLTLQAKDKGTPPQFSSVKVIHVTSPQFKAGPVKFEKDVYRAEISEFAPPNTPVVMVKAIPAYSHLRYVFKSTPGKAKFSLNYNTGLISILEPVKRQQAAHFELEVTTSDRKASTKVLVKVLGANSNPPEFTQTAYKAAFDENVPIGTTVMSLSAVDPDEGENGYVTYSIANLNHVPFAIDHFTGAVSTSENLDYELMPRVYTLRIRASDWGLPYRREVEVLATITLNNLNDNTPLFEKINCEGTIPRDLGVGEQITTVSAIDADELQLVQYQIEAGNELDFFSLNPNSGVLSLKRSLMDGLGAKVSFHSLRITATDGENFATPLYINITVAASHKLVNLQCEETGVAKMLAEKLLQANKLHNQGEVEDIFFDSHSVNAHIPQFRSTLPTGIQVKENQPVGSSVIFMNSTDLDTGFNGKLVYAVSGGNEDSCFMIDMETGMLKILSPLDRETTDKYTLNITVYDLGIPQKAAWRLLHVVVVDANDNPPEFLQESYFVEVSEDKEVHSEIIQVEATDKDLGPNGHVTYSIVTDTDTFSIDSVTGVVNIARPLDRELQHEHSLKIEARDQAREEPQLFSTVVVKVSLEDVNDNPPTFIPPNYRVKVREDLPEGTVIMWLEAHDPDLGQSGQVRYSLLDHGEGNFDVDKLSGAVRIVQQLDFEKKQVYNLTVRAKDKGKPVSLSSTCYVEVEVVDVNENLHPPVFSSFVEKGTVKEDAPVGSLVMTVSAHDEDARRDGEIRYSIRDGSGVGVFKIGEETGVIETSDRLDRESTSHYWLTVFATDQGVVPLSSFIEIYIEVEDVNDNAPQTSEPVYYPEIMENSPKDVSVVQIEAFDPDSSSNDKLMYKITSGNPQGFFSIHPKTGLITTTSRKLDREQQDEHILEVTVTDNGSPPKSTIARVIVKILDENDNKPQFLQKFYKIRLPEREKPDRERNARREPLYHVIATDKDEGPNAEISYSIEDGNEHGKFFIEPKTGVVSSKRFSAAGEYDILSIKAVDNGRPQKSSTTRLHIEWISKPKPSLEPISFEESFFTFTVMESDPVAHMIGVISVEPPGIPLWFDITGGNYDSHFDVDKGTGTIIVAKPLDAEQKSNYNLTVEATDGTTTILTQVFIKVIDTNDHRPQFSTSKYEVVIPEDTAPETEILQISAVDQDEKNKLIYTLQSSRDPLSLKKFRLDPATGSLYTSEKLDHEAVHQHTLTVMVRDQDVPVKRNFARIVVNVSDTNDHAPWFTASSYKGRVYESAAVGSVVLQVTALDKDKGKNAEVLYSIESGNIGNSFMIDPVLGSIKTAKELDRSNQAEYDLMVKATDKGSPPMSEITSVRIFVTIADNASPKFTSKEYSVELSETVSIGSFVGMVTAHSQSSVVYEIKDGNTGDAFDINPHSGTIITQKALDFETLPIYTLIIQGTNMAGLSTNTTVLVHLQDENDNAPVFMQAEYTGLISESASINSVVLTDRNVPLVIRAADADKDSNALLVYHIVEPSVHTYFAIDSSTGAIHTVLSLDYEETSIFHFTVQVHDMGTPRLFAEYAANVTVHVIDINDCPPVFAKPLYEASLLLPTYKGVKVITVNATDADSSAFSQLIYSITEGNIGEKFSMDYKTGALTVQNTTQLRSRYELTVRASDGRFAGLTSVKINVKESKESHLKFTQDVYSAVVKENSTEAETLAVITAIGNPINEPLFYHILNPDRRFKISRTSGVLSTTGTPFDREQQEAFDVVVEVTEEHKPSAVAHVVVKVIVEDQNDNAPVFVNLPYYAVVKVDTEVGHVIRYVTAVDRDSGRNGEVHYYLKEHHEHFQIGPLGEISLKKQFELDTLNKEYLVTVVAKDGGNPAFSAEVIVPITVMNKAMPVFEKPFYSAEIAESIQVHSPVVHVQANSPEGLKVFYSITDGDPFSQFTINFNTGVINVIAPLDFEAHPAYKLSIRATDSLTGAHAEVFVDIIVDDINDNPPVFAQQSYAVTLSEASVIGTSVVQVRATDSDSEPNRGISYQMFGNHSKSHDHFHVDSSTGLISLLRTLDYEQSRQHTIFVRAVDGGMPTLSSDVIVTVDVTDLNDNPPLFEQQIYEARISEHAPHGHFVTCVKAYDADSSDIDKLQYSILSGNDHKHFVIDSATGIITLSNLHRHALKPFYSLNLSVSDGVFRSSTQVHVTVIGGNLHSPAFLQNEYEVELAENAPLHTLVMEVKTTDGDSGIYGHVTYHIVNDFAKDRFYINERGQIFTLEKLDRETPAEKVISVRLMAKDAGGKVAFCTVNVILTDDNDNAPQFRATKYEVNIGSSAAKGTSVVKVLASDADEGSNADITYAIEADSESVKENLEINKLSGVITTKESLIGLENEFFTFFVRAVDNGSPSKESVVLVYVKILPPEMQLPKFSEPFYTFTVSEDVPIGTEIDLIRAEHSGTVLYSLVKGNTPESNRDESFVIDRQSGRLKLEKSLDHETTKWYQFSILARCTQDDHEMVASVDVSIQVKDANDNSPVFESSPYEAFIVENLPGGSRVIQIRASDADSGTNGQVMYSLDQSQSVEVIESFAINMETGWITTLKELDHEKRDNYQIKVVASDHGEKIQLSSTAIVDVTVTDVNDSPPRFTAEIYKGTVSEDDPQGGVIAILSTTDADSEEINRQVTYFITGGDPLGQFAVETIQNEWKVYVKKPLDREKRDNYLLTITATDGTFSSKAIVEVKVLDANDNSPVCEKTLYSDTIPEDVLPGKLIMQISATDADIRSNAEITYTLLGSGAEKFKLNPDTGELKTSTPLDREEQAVYHLLVRATDGGGRFCQASIVLTLEDVNDNAPEFSADPYAITVFENTEPGTLLTRVQATDADAGLNRKILYSLIDSADGQFSINELSGIIQLEKPLDRELQAVYTLSLKAVDQGLPRRLTATGTVIVSVLDINDNPPVFEYREYGATVSEDILVGTEVLQVYAASRDIEANAEITYSIISGNEHGKFSIDSKTGAVFIIENLDYESSHEYYLTVEATDGGTPSLSDVATVNVNVTDINDNTPVFSQDTYTTVISEDAVLEQSVITVMADDADGPSNSHIHYSIIDGNQGSSFTIDPVRGEVKVTKLLDRETISGYTLTVQASDNGSPPRVNTTTVNIDVSDVNDNAPVFSRGNYSVIIQENKPVGFSVLQLVVTDEDSSHNGPPFFFTIVTGNDEKAFEVNPQGVLLTSSAIKRKEKDHYLLQVKVADNGKPQLSSLTYIDIRVIEESIYPPAILPLEIFITSSGEEYSGGVIGKIHATDQDVYDTLTYSLDPQMDNLFSVSSTGGKLIAHKKLDIGQYLLNVSVTDGKFTTVADITVHIRQVTQEMLNHTIAIRFANLTPEEFVGDYWRNFQRALRNILGVRRNDIQIVSLQSSEPHPHLDVLLFVEKPGSAQISTKQLLHKINSSVTDIEEIIGVRILNVFQKLCAGLDCPWKFCDEKVSVDESVMSTHSTARLSFVTPRHHRAAVCLCKEGRCPPVHHGCEDDPCPEGSECVSDPWEEKHTCVCPSGRFGQCPGSSSMTLTGNSYVKYRLTENENKLEMKLTMRLRTYSTHAVVMYARGTDYSILEIHHGRLQYKFDCGSGPGIVSVQSIQVNDGQWHAVALEVNGNYARLVLDQVHTASGTAPGTLKTLNLDNYVFFGGHIRQQGTRHGRSPQVGNGFRGCMDSIYLNGQELPLNSKPRSYAHIEESVDVSPGCFLTATEDCASNPCQNGGVCNPSPAGGYYCKCSALYIGTHCEISVNPCSSKPCLYGGTCVVDNGGFVCQCRGLYTGQRCQLSPYCKDEPCKNGGTCFDSLDGAVCQCDSGFRGERCQSDIDECSGNPCLHGALCENTHGSYHCNCSHEYRGRHCEDAAPNQYVSTPWNIGLAEGIGIVVFVAGIFLLVVVFVLCRKMISRKKKHQAEPKDKHLGPATAFLQRPYFDSKLNKNIYSDIPPQVPVRPISYTPSIPSDSRNNLDRNSFEGSAIPEHPEFSTFNPESVHGHRKAVAVCSVAPNLPPPPPSNSPSDSDSIQKPSWDFDYDTKVVDLDPCLSKKPLEEKPSQPYSARESLSEVQSLSSFQSESCDDNGYHWDTSDWMPSVPLPDIQEFPNYEVIDEQTPLYSADPNAIDTDYYPGGYDIESDFPPPPEDFPAADELPPLPPEFSNQFESIHPPRDMPAAGSLGSSSRNRQRFNLNQYLPNFYPLDMSEPQTKGTGENSTCREPHAPYPPGYQRHFEAPAVESMPMSVYASTASCSDVSACCEVESEVMMSDYESGDDGHFEEVTIPPLDSQQHTEV.

The first 21 residues, 1–21 (MGRHLALLLLLLLLFQHFGDS), serve as a signal peptide directing secretion. At 22-4181 (DGSQRLEQTP…STPWNIGLAE (4160 aa)) the chain is on the extracellular side. 2 consecutive Cadherin domains span residues 35-149 (THLE…RPLF) and 150-257 (SPTS…APVI). Asn40 carries an N-linked (GlcNAc...) asparagine glycan. An N-linked (GlcNAc...) asparagine glycan is attached at Asn333. Cadherin domains follow at residues 368–463 (EKDV…PPEF), 464–569 (TQTA…TPLF), 570–673 (EKIN…VNLQ), 718–822 (STLP…PPEF), 823–927 (LQES…PPTF), 928–1034 (IPPN…PPVF), 1035–1139 (SSFV…APQT), 1140–1245 (SEPV…KPQF), 1246–1357 (LQKF…EPIS), 1359–1456 (EESF…RPQF), 1457–1562 (STSK…APWF), 1563–1667 (TASS…SPKF), 1668–1765 (TSKE…APVF), 1766–1879 (MQAE…PPVF), 1880–1979 (AKPL…HLKF), 1980–2081 (TQDV…APVF), 2082–2182 (VNLP…MPVF), 2183–2283 (EKPF…PPVF), 2284–2390 (AQQS…PPLF), 2391–2492 (EQQI…SPAF), 2493–2596 (LQNE…APQF), 2597–2703 (RATK…LPKF), 2704–2809 (SEPF…SPVF), 2810–2918 (ESSP…PPRF), 2919–3023 (TAEI…SPVC), 3024–3125 (EKTL…APEF), 3126–3230 (SADP…PPVF), 3231–3335 (EYRE…TPVF), 3336–3440 (SQDT…APVF), 3441–3545 (SRGN…PPAI), and 3546–3647 (LPLE…AIRF). N-linked (GlcNAc...) asparagine glycans are attached at residues Asn660, Asn740, and Asn791. Asn998 carries an N-linked (GlcNAc...) asparagine glycan. Asn1426 and Asn1551 each carry an N-linked (GlcNAc...) asparagine glycan. N-linked (GlcNAc...) asparagine glycans are attached at residues Asn1748, Asn1864, Asn1902, Asn1940, and Asn1991. 2 N-linked (GlcNAc...) asparagine glycosylation sites follow: Asn2325 and Asn2464. Residues Asn3324, Asn3422, Asn3444, Asn3613, Asn3640, and Asn3716 are each glycosylated (N-linked (GlcNAc...) asparagine). The 38-residue stretch at 3790–3827 (VHHGCEDDPCPEGSECVSDPWEEKHTCVCPSGRFGQCP) folds into the EGF-like 1 domain. Disulfide bonds link Cys3794–Cys3805, Cys3799–Cys3816, Cys3818–Cys3826, Cys3976–Cys4009, Cys4017–Cys4028, Cys4022–Cys4038, Cys4040–Cys4049, Cys4056–Cys4067, Cys4061–Cys4076, Cys4078–Cys4087, Cys4093–Cys4104, Cys4098–Cys4113, Cys4115–Cys4124, Cys4131–Cys4142, and Cys4136–Cys4151. One can recognise a Laminin G-like domain in the interval 3829–4009 (SSSMTLTGNS…EESVDVSPGC (181 aa)). 3 consecutive EGF-like domains span residues 4013 to 4050 (ATED…THCE), 4052 to 4088 (SVNP…QRCQ), and 4089 to 4125 (LSPY…ERCQ). One can recognise an EGF-like 5; calcium-binding domain in the interval 4127–4163 (DIDECSGNPCLHGALCENTHGSYHCNCSHEYRGRHCE). N-linked (GlcNAc...) asparagine glycosylation is present at Asn4152. The cysteines at positions 4153 and 4162 are disulfide-linked. Residues 4182 to 4202 (GIGIVVFVAGIFLLVVVFVLC) traverse the membrane as a helical segment. Over 4203–4588 (RKMISRKKKH…PLDSQQHTEV (386 aa)) the chain is Cytoplasmic. The Nuclear localization signal motif lies at 4204–4214 (KMISRKKKHQA). Disordered stretches follow at residues 4255–4275 (SYTP…SFEG), 4303–4327 (SVAP…QKPS), and 4343–4376 (LSKK…SESC). The segment covering 4256–4265 (YTPSIPSDSR) has biased composition (polar residues). Polar residues predominate over residues 4363-4374 (SEVQSLSSFQSE). Residues 4378–4382 (DNGYH) carry the PTB-like motif motif. Disordered stretches follow at residues 4435–4479 (FPPP…SSSR) and 4565–4588 (ESGD…HTEV).

In terms of assembly, interacts (via the C-terminus 4300-4400 AA) with ATN1. Interacts with RERE. Post-translationally, undergoes proteolytic cleavage. The extracellular domain is cleaved off and the cytoplasmic domain (about 400 AA) shuttles to the nucleus. Expressed in many epithelial and some endothelial and smooth muscle cells.

It is found in the cell membrane. It localises to the nucleus. In terms of biological role, plays an essential role for cellular polarization, directed cell migration and modulating cell-cell contact. This Homo sapiens (Human) protein is Protocadherin Fat 1 (FAT1).